Consider the following 293-residue polypeptide: 4-hydroxy-tetrahydrodipicolinate synthase (293 aa).

Residue threonine 45 participates in pyruvate binding. Tyrosine 133 (proton donor/acceptor) is an active-site residue. Residue lysine 162 is the Schiff-base intermediate with substrate of the active site. Position 204 (isoleucine 204) interacts with pyruvate.

This sequence belongs to the DapA family. Homotetramer; dimer of dimers.

It localises to the cytoplasm. It carries out the reaction L-aspartate 4-semialdehyde + pyruvate = (2S,4S)-4-hydroxy-2,3,4,5-tetrahydrodipicolinate + H2O + H(+). The protein operates within amino-acid biosynthesis; L-lysine biosynthesis via DAP pathway; (S)-tetrahydrodipicolinate from L-aspartate: step 3/4. Its function is as follows. Catalyzes the condensation of (S)-aspartate-beta-semialdehyde [(S)-ASA] and pyruvate to 4-hydroxy-tetrahydrodipicolinate (HTPA). The polypeptide is 4-hydroxy-tetrahydrodipicolinate synthase (Mesorhizobium japonicum (strain LMG 29417 / CECT 9101 / MAFF 303099) (Mesorhizobium loti (strain MAFF 303099))).